A 680-amino-acid chain; its full sequence is DNA-directed RNA polymerase subunit beta' (680 aa).

Cysteine 69, cysteine 71, cysteine 87, and cysteine 90 together coordinate Zn(2+). 3 residues coordinate Mg(2+): aspartate 489, aspartate 491, and aspartate 493.

The protein belongs to the RNA polymerase beta' chain family. RpoC1 subfamily. In terms of assembly, in plastids the minimal PEP RNA polymerase catalytic core is composed of four subunits: alpha, beta, beta', and beta''. When a (nuclear-encoded) sigma factor is associated with the core the holoenzyme is formed, which can initiate transcription. It depends on Mg(2+) as a cofactor. Requires Zn(2+) as cofactor.

The protein resides in the plastid. Its subcellular location is the chloroplast. It carries out the reaction RNA(n) + a ribonucleoside 5'-triphosphate = RNA(n+1) + diphosphate. Functionally, DNA-dependent RNA polymerase catalyzes the transcription of DNA into RNA using the four ribonucleoside triphosphates as substrates. The sequence is that of DNA-directed RNA polymerase subunit beta' from Lepidium virginicum (Virginia pepperweed).